We begin with the raw amino-acid sequence, 438 residues long: ATP-dependent RNA helicase RhlB (438 aa).

A Q motif motif is present at residues 9 to 37 (QRFADLPLHPEVKQALAENGFEFCTPIQA). The Helicase ATP-binding domain maps to 40–219 (LPVLLQSKDI…YDHMNEPVKV (180 aa)). ATP is bound at residue 53-60 (AQTGTGKT). A DEAD box motif is present at residues 165 to 168 (DEAD). The 148-residue stretch at 243 to 390 (KMRLLLTLIE…VSNYDSEALL (148 aa)) folds into the Helicase C-terminal domain. The segment at 395–438 (TPAKIHRKHPSGTRNLRDRSGASRPGAQRSGARPPRHDRTRRHS) is disordered. Positions 428 to 438 (PPRHDRTRRHS) are enriched in basic residues.

Belongs to the DEAD box helicase family. RhlB subfamily. Component of the RNA degradosome, which is a multiprotein complex involved in RNA processing and mRNA degradation.

Its subcellular location is the cytoplasm. It catalyses the reaction ATP + H2O = ADP + phosphate + H(+). DEAD-box RNA helicase involved in RNA degradation. Has RNA-dependent ATPase activity and unwinds double-stranded RNA. This chain is ATP-dependent RNA helicase RhlB, found in Shewanella baltica (strain OS185).